A 463-amino-acid chain; its full sequence is Eukaryotic translation initiation factor 3 subunit E (463 aa).

One can recognise a PCI domain in the interval 224-407; sequence FNLGENQGCQ…NMLHITRPHA (184 aa). The segment at 432–463 is disordered; that stretch reads QSSVGEPRERGERGERGNKGGRGRPRTQEVAA. A compositionally biased stretch (basic and acidic residues) spans 437–449; sequence EPRERGERGERGN.

The protein belongs to the eIF-3 subunit E family. As to quaternary structure, component of the eukaryotic translation initiation factor 3 (eIF-3) complex.

The protein resides in the cytoplasm. Functionally, component of the eukaryotic translation initiation factor 3 (eIF-3) complex, which is involved in protein synthesis of a specialized repertoire of mRNAs and, together with other initiation factors, stimulates binding of mRNA and methionyl-tRNAi to the 40S ribosome. The eIF-3 complex specifically targets and initiates translation of a subset of mRNAs involved in cell proliferation. The polypeptide is Eukaryotic translation initiation factor 3 subunit E (Cryptococcus neoformans var. neoformans serotype D (strain JEC21 / ATCC MYA-565) (Filobasidiella neoformans)).